The following is a 381-amino-acid chain: Succinyl-diaminopimelate desuccinylase (381 aa).

Histidine 69 is a binding site for Zn(2+). Aspartate 71 is a catalytic residue. Zn(2+) is bound at residue aspartate 103. Glutamate 137 serves as the catalytic Proton acceptor. The Zn(2+) site is built by glutamate 138, glutamate 166, and histidine 355.

The protein belongs to the peptidase M20A family. DapE subfamily. In terms of assembly, homodimer. Requires Zn(2+) as cofactor. The cofactor is Co(2+).

It catalyses the reaction N-succinyl-(2S,6S)-2,6-diaminopimelate + H2O = (2S,6S)-2,6-diaminopimelate + succinate. The protein operates within amino-acid biosynthesis; L-lysine biosynthesis via DAP pathway; LL-2,6-diaminopimelate from (S)-tetrahydrodipicolinate (succinylase route): step 3/3. In terms of biological role, catalyzes the hydrolysis of N-succinyl-L,L-diaminopimelic acid (SDAP), forming succinate and LL-2,6-diaminopimelate (DAP), an intermediate involved in the bacterial biosynthesis of lysine and meso-diaminopimelic acid, an essential component of bacterial cell walls. This chain is Succinyl-diaminopimelate desuccinylase, found in Rickettsia massiliae (strain Mtu5).